Consider the following 681-residue polypeptide: Potassium-transporting ATPase ATP-binding subunit (681 aa).

Transmembrane regions (helical) follow at residues 37-57 (MFVV…PTYF), 64-84 (VGYN…ANFA), 218-238 (IALT…VMTL), and 255-275 (IALL…AIGI). D306 serves as the catalytic 4-aspartylphosphate intermediate. ATP contacts are provided by residues D343, E347, 375-382 (FSAETRMS), and K394. Residues D517 and D521 each contribute to the Mg(2+) site. The next 3 membrane-spanning stretches (helical) occupy residues 573 to 595 (ALTT…AIIS), 615 to 635 (AILS…PIAM), and 655 to 675 (IYGL…DMII).

Belongs to the cation transport ATPase (P-type) (TC 3.A.3) family. Type IA subfamily. The system is composed of three essential subunits: KdpA, KdpB and KdpC.

It localises to the cell membrane. It carries out the reaction K(+)(out) + ATP + H2O = K(+)(in) + ADP + phosphate + H(+). Functionally, part of the high-affinity ATP-driven potassium transport (or Kdp) system, which catalyzes the hydrolysis of ATP coupled with the electrogenic transport of potassium into the cytoplasm. This subunit is responsible for energy coupling to the transport system and for the release of the potassium ions to the cytoplasm. The protein is Potassium-transporting ATPase ATP-binding subunit of Caldanaerobacter subterraneus subsp. tengcongensis (strain DSM 15242 / JCM 11007 / NBRC 100824 / MB4) (Thermoanaerobacter tengcongensis).